The primary structure comprises 31 residues: Cycloviolacin-O6 (31 aa).

The segment at residues 1–31 is a cross-link (cyclopeptide (Gly-Asn)); it reads GTLPCGESCVWIPCISAAVGCSCKSKVCYKN. Intrachain disulfides connect C5–C21, C9–C23, and C14–C28.

Post-translationally, this is a cyclic peptide.

Probably participates in a plant defense mechanism. The polypeptide is Cycloviolacin-O6 (Viola odorata (Sweet violet)).